Here is a 330-residue protein sequence, read N- to C-terminus: Mas-related G-protein coupled receptor member X2 (330 aa).

Topologically, residues 1–33 (MDPTTPAWGNESTTMNGNDQALPLLCGKETLIP) are extracellular. A helical transmembrane segment spans residues 34 to 54 (VFLILFIALVGLVGNGFVLWL). At 55 to 63 (LGFCMRRNA) the chain is on the cytoplasmic side. The helical transmembrane segment at 64 to 84 (FSVYVLSLAGADFLFLCFQLI) threads the bilayer. Residues 85–96 (NCLVYLSNFFCS) are Extracellular-facing. Residues 97-117 (ISIDFPSFFTTVMTCAYLAGL) form a helical membrane-spanning segment. The Cytoplasmic segment spans residues 118–144 (SMLSTISTERCLSVLWPIWYRCRRPRH). The helical transmembrane segment at 145–165 (LSAVVCVLLWALSLLLSILEG) threads the bilayer. Topologically, residues 166 to 184 (KFCGFFFSDGDSGWCQTFD) are extracellular. The chain crosses the membrane as a helical span at residues 185–205 (FITAAWLIFLFMVLCGSSLAL). Residues 206-228 (LVRILCGSRGLPLTRLYLTILLT) lie on the Cytoplasmic side of the membrane. Residues 229–249 (VLVFLLCGLPFGIQWFLILWI) traverse the membrane as a helical segment. Over 250-264 (WENSDVLFCHIHPVS) the chain is Extracellular. A helical membrane pass occupies residues 265–285 (VVLSSLNSSANPIIYFFVGTF). Topologically, residues 286–330 (RKQWRLQQPILKLALQRALQDTAEVDHSEGCFRQGTPEMSRSSLV) are cytoplasmic.

It belongs to the G-protein coupled receptor 1 family. Mas subfamily.

It localises to the cell membrane. Its function is as follows. Mast cell-specific receptor for basic secretagogues, i.e. cationic amphiphilic drugs, as well as endo- or exogenous peptides, consisting of a basic head group and a hydrophobic core. Recognizes and binds small molecules containing a cyclized tetrahydroisoquinoline (THIQ), such as non-steroidal neuromuscular blocking drugs (NMBDs), including tubocurarine and atracurium. In response to these compounds, mediates pseudo-allergic reactions characterized by histamine release, inflammation and airway contraction. This chain is Mas-related G-protein coupled receptor member X2 (MRGPRX2), found in Pongo pygmaeus (Bornean orangutan).